The chain runs to 364 residues: Glycosyltransferase 8 domain-containing protein 1 (364 aa).

Topologically, residues 1–5 (MRRVH) are cytoplasmic. Residues 6–26 (ITVILLAAVIFLLVLHHNILG) form a helical; Signal-anchor for type II membrane protein membrane-spanning segment. Topologically, residues 27–364 (LSDILKRQNS…QFSLIRRHAE (338 aa)) are lumenal. Residues N102, N247, and N255 are each glycosylated (N-linked (GlcNAc...) asparagine).

This sequence belongs to the glycosyltransferase 8 family.

It is found in the membrane. The protein is Glycosyltransferase 8 domain-containing protein 1 (glt8d1) of Xenopus laevis (African clawed frog).